Consider the following 21-residue polypeptide: Major outer membrane protein P44 (21 aa).

In terms of assembly, monomer.

It is found in the cell outer membrane. The chain is Major outer membrane protein P44 from Mannheimia haemolytica (Pasteurella haemolytica).